Here is a 338-residue protein sequence, read N- to C-terminus: UPF0284 protein PAE0372 (338 aa).

This sequence belongs to the UPF0284 family.

The protein is UPF0284 protein PAE0372 of Pyrobaculum aerophilum (strain ATCC 51768 / DSM 7523 / JCM 9630 / CIP 104966 / NBRC 100827 / IM2).